The sequence spans 25 residues: Secapin-1 (25 aa).

Cys9 and Cys20 are joined by a disulfide.

In terms of tissue distribution, expressed by the venom gland.

Its subcellular location is the secreted. Functionally, serine protease inhibitor which exhibits antifibrinolytic, antielastolytic and antimicrobial activities. Displays antimicrobial activity against bacteria and fungi. Likely functions in the innate immune response to microbial infection and possibly in the venom, as an antifibrinolytic agent. This Apis mellifera (Honeybee) protein is Secapin-1.